The chain runs to 80 residues: Small ribosomal subunit protein bS18 (80 aa).

This sequence belongs to the bacterial ribosomal protein bS18 family. In terms of assembly, part of the 30S ribosomal subunit. Forms a tight heterodimer with protein bS6.

In terms of biological role, binds as a heterodimer with protein bS6 to the central domain of the 16S rRNA, where it helps stabilize the platform of the 30S subunit. This chain is Small ribosomal subunit protein bS18, found in Clostridium perfringens (strain ATCC 13124 / DSM 756 / JCM 1290 / NCIMB 6125 / NCTC 8237 / Type A).